A 141-amino-acid chain; its full sequence is Large ribosomal subunit protein uL11 (141 aa).

Belongs to the universal ribosomal protein uL11 family. In terms of assembly, part of the ribosomal stalk of the 50S ribosomal subunit. Interacts with L10 and the large rRNA to form the base of the stalk. L10 forms an elongated spine to which L12 dimers bind in a sequential fashion forming a multimeric L10(L12)X complex. Post-translationally, one or more lysine residues are methylated.

Its function is as follows. Forms part of the ribosomal stalk which helps the ribosome interact with GTP-bound translation factors. The protein is Large ribosomal subunit protein uL11 of Lactobacillus acidophilus (strain ATCC 700396 / NCK56 / N2 / NCFM).